The following is a 312-amino-acid chain: Protoheme IX farnesyltransferase 1 (312 aa).

Helical transmembrane passes span 21–41 (GVLA…LLVT), 53–73 (IPSP…AGSA), 105–125 (SALV…ALGA), 127–147 (LLAA…YTLV), 156–176 (IVWG…AVTG), 182–202 (ALVM…SLAM), 225–245 (VSAR…LLVP), 246–266 (ATSW…LIVA), and 292–312 (LALL…SFVA).

Belongs to the UbiA prenyltransferase family. Protoheme IX farnesyltransferase subfamily.

Its subcellular location is the cell membrane. The catalysed reaction is heme b + (2E,6E)-farnesyl diphosphate + H2O = Fe(II)-heme o + diphosphate. It functions in the pathway porphyrin-containing compound metabolism; heme O biosynthesis; heme O from protoheme: step 1/1. Its function is as follows. Converts heme B (protoheme IX) to heme O by substitution of the vinyl group on carbon 2 of heme B porphyrin ring with a hydroxyethyl farnesyl side group. This is Protoheme IX farnesyltransferase 1 from Saccharopolyspora erythraea (strain ATCC 11635 / DSM 40517 / JCM 4748 / NBRC 13426 / NCIMB 8594 / NRRL 2338).